Here is a 248-residue protein sequence, read N- to C-terminus: Tryptophan synthase alpha chain (248 aa).

Residues Glu36 and Asp47 each act as proton acceptor in the active site.

Belongs to the TrpA family. In terms of assembly, tetramer of two alpha and two beta chains.

It catalyses the reaction (1S,2R)-1-C-(indol-3-yl)glycerol 3-phosphate + L-serine = D-glyceraldehyde 3-phosphate + L-tryptophan + H2O. It functions in the pathway amino-acid biosynthesis; L-tryptophan biosynthesis; L-tryptophan from chorismate: step 5/5. Its function is as follows. The alpha subunit is responsible for the aldol cleavage of indoleglycerol phosphate to indole and glyceraldehyde 3-phosphate. In Archaeoglobus fulgidus (strain ATCC 49558 / DSM 4304 / JCM 9628 / NBRC 100126 / VC-16), this protein is Tryptophan synthase alpha chain.